The following is a 366-amino-acid chain: Flagellar P-ring protein (366 aa).

The signal sequence occupies residues methionine 1–alanine 20.

It belongs to the FlgI family. In terms of assembly, the basal body constitutes a major portion of the flagellar organelle and consists of four rings (L,P,S, and M) mounted on a central rod.

The protein localises to the periplasm. Its subcellular location is the bacterial flagellum basal body. Functionally, assembles around the rod to form the L-ring and probably protects the motor/basal body from shearing forces during rotation. The protein is Flagellar P-ring protein of Escherichia coli O6:H1 (strain CFT073 / ATCC 700928 / UPEC).